A 124-amino-acid chain; its full sequence is Small ribosomal subunit protein uS12 (124 aa).

Asp89 bears the 3-methylthioaspartic acid mark.

It belongs to the universal ribosomal protein uS12 family. In terms of assembly, part of the 30S ribosomal subunit. Contacts proteins S8 and S17. May interact with IF1 in the 30S initiation complex.

In terms of biological role, with S4 and S5 plays an important role in translational accuracy. Functionally, interacts with and stabilizes bases of the 16S rRNA that are involved in tRNA selection in the A site and with the mRNA backbone. Located at the interface of the 30S and 50S subunits, it traverses the body of the 30S subunit contacting proteins on the other side and probably holding the rRNA structure together. The combined cluster of proteins S8, S12 and S17 appears to hold together the shoulder and platform of the 30S subunit. This is Small ribosomal subunit protein uS12 from Blochmanniella pennsylvanica (strain BPEN).